The following is a 748-amino-acid chain: tRNA endonuclease ANKZF1 (748 aa).

The segment at 96 to 120 (LFCSACDQIFQNHQEQREHYKLDWH) adopts a C2H2-type zinc-finger fold. The tract at residues 135–185 (SASDFEQQSSTGDLSSISGSDDTDSSSEEDLLPLDEGRAESEKPNRPPGFY) is disordered. The span at 143-154 (SSTGDLSSISGS) shows a compositional bias: low complexity. Residues 155-167 (DDTDSSSEEDLLP) are compositionally biased toward acidic residues. Over residues 169 to 179 (DEGRAESEKPN) the composition is skewed to basic and acidic residues. A VLRF1 domain is found at 227-370 (GPRYYVVLMA…QRVLHKLTTL (144 aa)). Gln-270 is an active-site residue. Phosphoserine occurs at positions 282 and 385. Positions 383-408 (FHSPETHWKPVREERKKDTEKEKTKV) are enriched in basic and acidic residues. Disordered stretches follow at residues 383–438 (FHSP…SEVE) and 460–497 (RRRR…TQEV). Residues 429 to 438 (SQEEDGSEVE) show a composition bias toward acidic residues. A compositionally biased stretch (polar residues) spans 484–497 (QPQDEPFSQPTQEV). An ANK 1 repeat occupies 515–545 (ELWDTLLAACRAGEVEVLKLQLATGLVDPGV). Ser-555 is modified (phosphoserine). Residues 556–585 (GGFTLLHAAAAAGRGLVVRLLLEAGADPTV) form an ANK 2 repeat. The segment at 621-677 (KARVPGPLTQEMEARQATRKKEQKAARRQREQQQRKQREQEEQEQEEQRRFAALSDR) is disordered. Positions 628 to 681 (LTQEMEARQATRKKEQKAARRQREQQQRKQREQEEQEQEEQRRFAALSDREKRA) form a coiled coil. The residue at position 629 (Thr-629) is a Phosphothreonine. The span at 632–677 (MEARQATRKKEQKAARRQREQQQRKQREQEEQEQEEQRRFAALSDR) shows a compositional bias: basic and acidic residues. Residues 654–666 (QRKQREQEEQEQE) are VCP/p97-interacting motif (VIM). Ser-702 is subject to Phosphoserine.

This sequence belongs to the ANKZF1/VMS1 family. Interacts (via VIM motif) with VCP.

It is found in the cytoplasm. Its function is as follows. Endonuclease that cleaves polypeptidyl-tRNAs downstream of the ribosome-associated quality control (RQC) pathway to release incompletely synthesized polypeptides for degradation. The RQC pathway disassembles aberrantly stalled translation complexes to recycle or degrade the constituent parts. ANKZF1 acts downstream disassembly of stalled ribosomes and specifically cleaves off the terminal 3'-CCA nucleotides universal to all tRNAs from polypeptidyl-tRNAs, releasing (1) ubiquitinated polypeptides from 60S ribosomal subunit for degradation and (2) cleaved tRNAs. ANKZF1-cleaved tRNAs are then repaired and recycled by ELAC1 and TRNT1. Also plays a role in the cellular response to hydrogen peroxide and in the maintenance of mitochondrial integrity under conditions of cellular stress. In Mus musculus (Mouse), this protein is tRNA endonuclease ANKZF1.